The sequence spans 1312 residues: DNA repair protein RAD50 (1312 aa).

ATP contacts are provided by R13, N36, G37, G39, K40, T41, T42, I65, D67, and Q158. Mg(2+) is bound at residue T41. Q158 provides a ligand contact to Mg(2+). Coiled coils occupy residues 185 to 347 (TKAL…LIRR) and 403 to 558 (QDLT…LQND). Phosphoserine is present on S469. Residue T568 is modified to Phosphothreonine. The stretch at 640-678 (DCTIDEYNDVLEETELSYKTALENLKMHQTTLEFNRKAL) forms a coiled coil. In terms of domain architecture, Zinc-hook spans 640-741 (DCTIDEYNDV…SLRLLEKHII (102 aa)). C687 and C690 together coordinate Zn(2+). 2 coiled-coil regions span residues 712 to 741 (DANFEKTLKDTVQNEKEYLHSLRLLEKHII) and 787 to 1108 (LAES…DIEK).

Belongs to the SMC family. RAD50 subfamily. As to quaternary structure, component of the MRN complex composed of two heterodimers RAD50 and MRE11 associated with a single XRS2. The MRN complexes dimerize on DNA to form joined MRN-MRN oligomers required for DNA double-strand break repair. Requires Zn(2+) as cofactor.

The protein localises to the nucleus. It localises to the chromosome. The catalysed reaction is ATP + H2O = ADP + phosphate + H(+). Functionally, component of the MRN complex, which plays a central role in double-strand break (DSB) repair, DNA recombination, maintenance of telomere integrity and meiosis. The MRN complex is involved in the repair of DNA double-strand breaks (DSBs) via homologous recombination (HR), an error-free mechanism which primarily occurs during S and G2 phases. The complex (1) mediates the end resection of damaged DNA, which generates proper single-stranded DNA, a key initial steps in HR, and is (2) required for the recruitment of other repair factors and efficient activation of TEL1/ATM and ATR upon DNA damage. The MRN complex possesses single-strand endonuclease activity and double-strand-specific 3'-5' exonuclease activity, which are provided by MRE11, to initiate end resection, which is required for single-strand invasion and recombination. Within the complex, RAD50 is both required to bind DNA ends and hold them in close proximity and regulate the activity of MRE11. RAD50 provides an ATP-dependent control of MRE11 by positioning DNA ends into the MRE11 active site: ATP-binding induces a large structural change from an open form with accessible MRE11 nuclease sites into a closed form. The MRN complex is also required for the processing of R-loops. This Saccharomyces cerevisiae (strain ATCC 204508 / S288c) (Baker's yeast) protein is DNA repair protein RAD50.